We begin with the raw amino-acid sequence, 418 residues long: Tyrosine--tRNA ligase (418 aa).

Tyr34 is an L-tyrosine binding site. The short motif at 39-48 is the 'HIGH' region element; sequence PTADSLHLGH. Residues Tyr169 and Gln173 each contribute to the L-tyrosine site. Residues 229–233 carry the 'KMSKS' region motif; that stretch reads KFGKS. Lys232 is a binding site for ATP. Residues 352–418 enclose the S4 RNA-binding domain; that stretch reads LNLVDMLVTA…GKKKYAVLTY (67 aa).

The protein belongs to the class-I aminoacyl-tRNA synthetase family. TyrS type 1 subfamily. Homodimer.

The protein localises to the cytoplasm. The catalysed reaction is tRNA(Tyr) + L-tyrosine + ATP = L-tyrosyl-tRNA(Tyr) + AMP + diphosphate + H(+). Functionally, catalyzes the attachment of tyrosine to tRNA(Tyr) in a two-step reaction: tyrosine is first activated by ATP to form Tyr-AMP and then transferred to the acceptor end of tRNA(Tyr). This chain is Tyrosine--tRNA ligase, found in Streptococcus pyogenes serotype M28 (strain MGAS6180).